Here is a 996-residue protein sequence, read N- to C-terminus: UPF0182 protein CE0802 (996 aa).

The next 7 membrane-spanning stretches (helical) occupy residues 19–39 (VTWI…TVGF), 63–83 (IILF…AGYF), 115–135 (ILII…QRSW), 176–196 (STLL…LGGI), 212–234 (GARA…TYWL), 262–282 (KIIL…AIFL), and 290–310 (LAVV…PLML). The tract at residues 920–950 (VPDVNATEDADATTDGEDETPAAPAAPAGSE) is disordered. A compositionally biased stretch (acidic residues) spans 925 to 939 (ATEDADATTDGEDET). Low complexity predominate over residues 940-950 (PAAPAAPAGSE).

It belongs to the UPF0182 family.

The protein resides in the cell membrane. This Corynebacterium efficiens (strain DSM 44549 / YS-314 / AJ 12310 / JCM 11189 / NBRC 100395) protein is UPF0182 protein CE0802.